The following is a 142-amino-acid chain: Large-conductance mechanosensitive channel (142 aa).

The next 3 membrane-spanning stretches (helical) occupy residues Phe-10 to Gly-30, Leu-40 to Val-60, and Gly-86 to Val-106.

This sequence belongs to the MscL family. Homopentamer.

It localises to the cell inner membrane. Channel that opens in response to stretch forces in the membrane lipid bilayer. May participate in the regulation of osmotic pressure changes within the cell. The sequence is that of Large-conductance mechanosensitive channel from Delftia acidovorans (strain DSM 14801 / SPH-1).